A 300-amino-acid polypeptide reads, in one-letter code: Tyrosine recombinase XerC (300 aa).

Residues 1 to 86 form the Core-binding (CB) domain; sequence MESVLDAFDQ…AVKTFTAWAV (86 aa). The Tyr recombinase domain occupies 107–294; the sequence is TLPAVLRQDQ…TVARLRAVHD (188 aa). Active-site residues include arginine 151, lysine 175, histidine 246, arginine 249, and histidine 272. Tyrosine 281 functions as the O-(3'-phospho-DNA)-tyrosine intermediate in the catalytic mechanism.

This sequence belongs to the 'phage' integrase family. XerC subfamily. In terms of assembly, forms a cyclic heterotetrameric complex composed of two molecules of XerC and two molecules of XerD.

It localises to the cytoplasm. Site-specific tyrosine recombinase, which acts by catalyzing the cutting and rejoining of the recombining DNA molecules. The XerC-XerD complex is essential to convert dimers of the bacterial chromosome into monomers to permit their segregation at cell division. It also contributes to the segregational stability of plasmids. The sequence is that of Tyrosine recombinase XerC from Mycobacterium sp. (strain JLS).